A 715-amino-acid polypeptide reads, in one-letter code: Protein sneaky (715 aa).

Over Met1–Arg32 the chain is Cytoplasmic. The helical transmembrane segment at Phe33–Asn53 threads the bilayer. At Phe54–Asp66 the chain is on the extracellular side. The helical transmembrane segment at Leu67–Val87 threads the bilayer. Over Arg88–Ala109 the chain is Cytoplasmic. The helical transmembrane segment at Val110–Val130 threads the bilayer. The Extracellular segment spans residues Ala131–Lys373. The helical transmembrane segment at Val374 to Ile394 threads the bilayer. Topologically, residues Asn395 to Thr457 are cytoplasmic. The helical transmembrane segment at Val458–Ile478 threads the bilayer. Residues Asp479–Tyr553 lie on the Extracellular side of the membrane. Residues Tyr554 to Leu574 traverse the membrane as a helical segment. Residues Arg575–Lys715 lie on the Cytoplasmic side of the membrane. Residues Cys655–Cys691 form an RING-type; degenerate zinc finger.

Specifically expressed in testis.

It localises to the cytoplasmic vesicle. The protein localises to the secretory vesicle. Its subcellular location is the acrosome membrane. The protein resides in the cytoplasm. It is found in the cytoplasmic vesicle membrane. Its function is as follows. Component of the sperm acrosome membrane. Required for breakdown of the sperm plasma membrane after sperm entry into the egg, which is an essential prerequisite for successful fertilization. The protein is Protein sneaky of Drosophila melanogaster (Fruit fly).